Reading from the N-terminus, the 468-residue chain is 6-phospho-beta-galactosidase (468 aa).

Residues glutamine 19, histidine 116, asparagine 159, glutamate 160, and asparagine 297 each coordinate D-galactose 6-phosphate. Glutamate 160 serves as the catalytic Proton donor. Glutamate 375 acts as the Nucleophile in catalysis. 4 residues coordinate D-galactose 6-phosphate: serine 428, tryptophan 429, lysine 435, and tyrosine 437.

The protein belongs to the glycosyl hydrolase 1 family.

The catalysed reaction is a 6-phospho-beta-D-galactoside + H2O = D-galactose 6-phosphate + an alcohol. It functions in the pathway carbohydrate metabolism; lactose degradation; D-galactose 6-phosphate and beta-D-glucose from lactose 6-phosphate: step 1/1. The sequence is that of 6-phospho-beta-galactosidase from Streptococcus pyogenes serotype M3 (strain ATCC BAA-595 / MGAS315).